The primary structure comprises 350 residues: Cobalt-precorrin-5B C(1)-methyltransferase (350 aa).

Belongs to the CbiD family.

It catalyses the reaction Co-precorrin-5B + S-adenosyl-L-methionine = Co-precorrin-6A + S-adenosyl-L-homocysteine. It functions in the pathway cofactor biosynthesis; adenosylcobalamin biosynthesis; cob(II)yrinate a,c-diamide from sirohydrochlorin (anaerobic route): step 6/10. Catalyzes the methylation of C-1 in cobalt-precorrin-5B to form cobalt-precorrin-6A. The chain is Cobalt-precorrin-5B C(1)-methyltransferase from Syntrophotalea carbinolica (strain DSM 2380 / NBRC 103641 / GraBd1) (Pelobacter carbinolicus).